The primary structure comprises 522 residues: Probable poly(ADP-ribose) glycohydrolase 2 (522 aa).

It belongs to the poly(ADP-ribose) glycohydrolase family.

It carries out the reaction [(1''-&gt;2')-ADP-alpha-D-ribose](n) + H2O = [(1''-&gt;2')-ADP-alpha-D-ribose](n-1) + ADP-D-ribose. Its function is as follows. Poly(ADP-ribose) synthesized after DNA damage is only present transiently and is rapidly degraded by poly(ADP-ribose) glycohydrolase. The sequence is that of Probable poly(ADP-ribose) glycohydrolase 2 (PARG2) from Arabidopsis thaliana (Mouse-ear cress).